The chain runs to 496 residues: Lysine--tRNA ligase (496 aa).

Residues Glu409 and Glu416 each contribute to the Mg(2+) site.

Belongs to the class-II aminoacyl-tRNA synthetase family. In terms of assembly, homodimer. Requires Mg(2+) as cofactor.

The protein localises to the cytoplasm. The enzyme catalyses tRNA(Lys) + L-lysine + ATP = L-lysyl-tRNA(Lys) + AMP + diphosphate. The sequence is that of Lysine--tRNA ligase from Streptococcus gordonii (strain Challis / ATCC 35105 / BCRC 15272 / CH1 / DL1 / V288).